We begin with the raw amino-acid sequence, 299 residues long: Very long chain fatty acid elongase 5 (299 aa).

The residue at position 1 (Met-1) is an N-acetylmethionine. Transmembrane regions (helical) follow at residues 26 to 46 (WFLLDNYVPTLVCSILYLLIV), 64 to 84 (ILVVYNLGLTLLSLYMFCELV), 112 to 132 (VLWWYYFSKLIEFMDTFFFIL), 139 to 158 (ITVLHVYHHASMLNIWWFVM), 168 to 187 (FGATLNSFIHVLMYSYYGLS), 205 to 225 (GQLLQFVLTIIQTSCGVIWPC), and 226 to 246 (TFPLGWLYFQIGYMISLITLF). Ser-285 is subject to Phosphoserine.

This sequence belongs to the ELO family. ELOVL5 subfamily. In terms of assembly, interacts with TECR.

The protein localises to the endoplasmic reticulum membrane. It localises to the cell projection. It is found in the dendrite. The catalysed reaction is a very-long-chain acyl-CoA + malonyl-CoA + H(+) = a very-long-chain 3-oxoacyl-CoA + CO2 + CoA. It catalyses the reaction (6Z,9Z,12Z)-octadecatrienoyl-CoA + malonyl-CoA + H(+) = (8Z,11Z,14Z)-3-oxoeicosatrienoyl-CoA + CO2 + CoA. The enzyme catalyses (9Z,12Z,15Z)-octadecatrienoyl-CoA + malonyl-CoA + H(+) = (11Z,14Z,17Z)-3-oxoeicosatrienoyl-CoA + CO2 + CoA. It carries out the reaction (9Z)-hexadecenoyl-CoA + malonyl-CoA + H(+) = 3-oxo-(11Z)-octadecenoyl-CoA + CO2 + CoA. The catalysed reaction is (9Z)-octadecenoyl-CoA + malonyl-CoA + H(+) = 3-oxo-(11Z)-eicosenoyl-CoA + CO2 + CoA. It catalyses the reaction (11Z)-octadecenoyl-CoA + malonyl-CoA + H(+) = 3-oxo-(13Z)-eicosenoyl-CoA + CO2 + CoA. The enzyme catalyses (9Z,12Z)-octadecadienoyl-CoA + malonyl-CoA + H(+) = (11Z,14Z)-3-oxoicosa-11,14-dienoyl-CoA + CO2 + CoA. It carries out the reaction (6Z,9Z,12Z,15Z)-octadecatetraenoyl-CoA + malonyl-CoA + H(+) = (8Z,11Z,14Z,17Z)-3-oxoicosatetraenoyl-CoA + CO2 + CoA. The catalysed reaction is (5Z,8Z,11Z,14Z)-eicosatetraenoyl-CoA + malonyl-CoA + H(+) = (7Z,10Z,13Z,16Z)-3-oxodocosatetraenoyl-CoA + CO2 + CoA. It catalyses the reaction (5Z,8Z,11Z,14Z,17Z)-eicosapentaenoyl-CoA + malonyl-CoA + H(+) = 3-oxo-(7Z,10Z,13Z,16Z,19Z)-docosapentaenoyl-CoA + CO2 + CoA. The protein operates within lipid metabolism; polyunsaturated fatty acid biosynthesis. Functionally, catalyzes the first and rate-limiting reaction of the four reactions that constitute the long-chain fatty acids elongation cycle. This endoplasmic reticulum-bound enzymatic process allows the addition of 2 carbons to the chain of long- and very long-chain fatty acids (VLCFAs) per cycle. Condensing enzyme that acts specifically toward polyunsaturated acyl-CoA with the higher activity toward C18:3(n-6) acyl-CoA. May participate in the production of monounsaturated and of polyunsaturated VLCFAs of different chain lengths that are involved in multiple biological processes as precursors of membrane lipids and lipid mediators. In conditions where the essential linoleic and alpha linoleic fatty acids are lacking it is also involved in the synthesis of Mead acid from oleic acid. This Bos taurus (Bovine) protein is Very long chain fatty acid elongase 5.